The chain runs to 88 residues: MAHKKAGGSSRNGRDSDGRRLGVKKFGNEAVIAGNIIVRQRGTRWHPGANVGMGRDHTLFALTAGRVQFAKKHGRAYVTVVPAQAAAE.

A disordered region spans residues 1–21 (MAHKKAGGSSRNGRDSDGRRL).

This sequence belongs to the bacterial ribosomal protein bL27 family.

The chain is Large ribosomal subunit protein bL27 from Methylobacterium nodulans (strain LMG 21967 / CNCM I-2342 / ORS 2060).